Consider the following 396-residue polypeptide: Putative ribosomal RNA large subunit methyltransferase YwbD (396 aa).

The PUA domain maps to 1–79 (MKLLTLKKAH…KHEQIDQAFF (79 aa)).

This sequence belongs to the methyltransferase superfamily. RlmI family.

It is found in the cytoplasm. In Bacillus subtilis (strain 168), this protein is Putative ribosomal RNA large subunit methyltransferase YwbD (ywbD).